Consider the following 418-residue polypeptide: AP-3 complex subunit mu-2 (418 aa).

In terms of domain architecture, MHD spans 176–417 (NNEAYFDVVE…MTKAGKFQVR (242 aa)).

It belongs to the adaptor complexes medium subunit family. In terms of assembly, adaptor protein complex 3 (AP-3) is a heterotetramer composed of two large adaptins (delta-type subunit AP3D1 and beta-type subunit AP3B1 or AP3B2), a medium adaptin (mu-type subunit AP3M1 or AP3M2) and a small adaptin (sigma-type subunit APS1 or AP3S2). AP-3 associates with the BLOC-1 complex.

The protein resides in the golgi apparatus. Its subcellular location is the cytoplasmic vesicle membrane. In terms of biological role, component of the adaptor complexes which link clathrin to receptors in coated vesicles. Clathrin-associated protein complexes are believed to interact with the cytoplasmic tails of membrane proteins, leading to their selection and concentration. Ap47 is a subunit of the plasma membrane adaptor. In concert with the BLOC-1 complex, AP-3 is required to target cargos into vesicles assembled at cell bodies for delivery into neurites and nerve terminals. The protein is AP-3 complex subunit mu-2 (Ap3m2) of Mus musculus (Mouse).